A 268-amino-acid chain; its full sequence is 3-deoxy-manno-octulosonate cytidylyltransferase (268 aa).

It belongs to the KdsB family.

The protein localises to the cytoplasm. It carries out the reaction 3-deoxy-alpha-D-manno-oct-2-ulosonate + CTP = CMP-3-deoxy-beta-D-manno-octulosonate + diphosphate. The protein operates within nucleotide-sugar biosynthesis; CMP-3-deoxy-D-manno-octulosonate biosynthesis; CMP-3-deoxy-D-manno-octulosonate from 3-deoxy-D-manno-octulosonate and CTP: step 1/1. It functions in the pathway bacterial outer membrane biogenesis; lipopolysaccharide biosynthesis. Functionally, activates KDO (a required 8-carbon sugar) for incorporation into bacterial lipopolysaccharide in Gram-negative bacteria. This Psychrobacter cryohalolentis (strain ATCC BAA-1226 / DSM 17306 / VKM B-2378 / K5) protein is 3-deoxy-manno-octulosonate cytidylyltransferase.